The primary structure comprises 686 residues: Solute carrier family 22 member 23 (686 aa).

2 disordered regions span residues 1-62 (MAID…GGGP) and 169-193 (GNRS…DKGD). Residue asparagine 24 is glycosylated (N-linked (GlcNAc...) asparagine). Helical transmembrane passes span 234–254 (FSLL…ADWV) and 258–278 (PVLL…ALSV). A glycan (N-linked (GlcNAc...) asparagine) is linked at asparagine 279. 8 consecutive transmembrane segments (helical) span residues 288–308 (FFEG…RIEL), 315–335 (FMIT…MPGL), 344–364 (VLQA…SIFP), 467–487 (ADYY…CVVV), 494–514 (GGLL…LGLL), 538–558 (IAFS…SVFF), 569–589 (CGGL…APII), and 598–618 (FLHH…ILLL).

The protein belongs to the major facilitator (TC 2.A.1) superfamily. Organic cation transporter (TC 2.A.1.19) family.

The protein localises to the membrane. This Homo sapiens (Human) protein is Solute carrier family 22 member 23 (SLC22A23).